The chain runs to 328 residues: MCSTFILPPRRNNCNKSSSTIAYSKSQHEAPKQLLQLRSEIKPLIPLNQPSNFWESSQDSGVLSSLSSSPQQRSGLRSQKLHLTYIEKNKRVRAMIPQQQHYHAFDRPTHYNSRKTSGPPPLMRTPSSGFSSASSSENMFSGLTLSDNENKIHEIMDPSVDVDLDMFLLPDCRYKQPVQPSTSTSRNNVSQISGSSRLNGSTRHVAPIVPKVAMPSELSYANVKRSSGYVDYMPTTYNSNVTSNSSAASVPMSPGTWVRCHYCWESYVKLCQRVANLEPLISCDGPWNWHTLYDMQGRVTCPRLWFAQLDRAGSEMVEQMGHARNVPV.

Disordered regions lie at residues 56–78 (SSQDSGVLSSLSSSPQQRSGLRS), 108–135 (PTHYNSRKTSGPPPLMRTPSSGFSSASS), and 177–200 (PVQPSTSTSRNNVSQISGSSRLNG). The span at 178 to 200 (VQPSTSTSRNNVSQISGSSRLNG) shows a compositional bias: polar residues.

As to quaternary structure, interacts with fbf-2; the interaction probably mediates the release of the C-terminal tail of fbf-2 from the RNA-binding domain, thereby altering its RNA-binding affinity.

Plays a role in germline stem cell maintenance, perhaps acting in concert with mRNA-binding factor fbf-2. May regulate fbf-2 by modulating RNA-binding and perhaps by competition with the intramolecular interaction between the fbf-2 RNA-binding domain and C-terminal tail. In Caenorhabditis elegans, this protein is Lateral signaling target 1 protein.